We begin with the raw amino-acid sequence, 898 residues long: Serine/threonine-protein kinase PKH3 (898 aa).

Residues 11–293 form the Protein kinase domain; sequence FIFKEELGHG…LEQIKRHPYF (283 aa). Residues 17–25 and K41 contribute to the ATP site; that span reads LGHGSYSTV. Residue D138 is the Proton acceptor of the active site. Disordered regions lie at residues 435-484 and 675-850; these read PPKV…PSTE and DSKA…EKYS. The segment covering 459-468 has biased composition (polar residues); that stretch reads PLQTSSIPQK. A compositionally biased stretch (low complexity) spans 469–483; the sequence is LSTSSASSALSAPST. S696 is modified (phosphoserine). Residues 697-721 show a composition bias toward polar residues; that stretch reads IGNNVTTLSYTAKNGSQNNAPQNDN. Residues 723-738 are compositionally biased toward basic and acidic residues; that stretch reads GEEKPFRIPSSTKDRP. 3 stretches are compositionally biased toward polar residues: residues 740–758, 771–782, and 789–803; these read ANSTPSSRHPRVLSSNNAG, SAPSTNTYTNGS, and RPSTNVGNNKHNILT. Residue S753 is modified to Phosphoserine. Residues 804–817 are compositionally biased toward low complexity; it reads SKKQGSSVFSPSSS. The span at 818-831 shows a compositional bias: polar residues; that stretch reads TTKPQIKTTGYRQP. Phosphoserine is present on S871.

Belongs to the protein kinase superfamily. Ser/Thr protein kinase family.

It catalyses the reaction L-seryl-[protein] + ATP = O-phospho-L-seryl-[protein] + ADP + H(+). It carries out the reaction L-threonyl-[protein] + ATP = O-phospho-L-threonyl-[protein] + ADP + H(+). Serine/threonine-protein kinase which may phosphorylate the same targets substrates as PKH1 and PKH2, 2 upstream activators of PKC1. The protein is Serine/threonine-protein kinase PKH3 (PKH3) of Saccharomyces cerevisiae (strain ATCC 204508 / S288c) (Baker's yeast).